The sequence spans 274 residues: 2,3,4,5-tetrahydropyridine-2,6-dicarboxylate N-succinyltransferase (274 aa).

Arg-104 and Asp-141 together coordinate substrate.

The protein belongs to the transferase hexapeptide repeat family. Homotrimer.

Its subcellular location is the cytoplasm. The catalysed reaction is (S)-2,3,4,5-tetrahydrodipicolinate + succinyl-CoA + H2O = (S)-2-succinylamino-6-oxoheptanedioate + CoA. Its pathway is amino-acid biosynthesis; L-lysine biosynthesis via DAP pathway; LL-2,6-diaminopimelate from (S)-tetrahydrodipicolinate (succinylase route): step 1/3. This is 2,3,4,5-tetrahydropyridine-2,6-dicarboxylate N-succinyltransferase (dapD) from Escherichia coli O157:H7.